We begin with the raw amino-acid sequence, 364 residues long: Uroporphyrinogen decarboxylase (364 aa).

Residues 28–32 (RQAGR), Asp78, Tyr160, Thr215, and His333 each bind substrate.

It belongs to the uroporphyrinogen decarboxylase family. Homodimer.

It localises to the cytoplasm. It catalyses the reaction uroporphyrinogen III + 4 H(+) = coproporphyrinogen III + 4 CO2. The protein operates within porphyrin-containing compound metabolism; protoporphyrin-IX biosynthesis; coproporphyrinogen-III from 5-aminolevulinate: step 4/4. Catalyzes the decarboxylation of four acetate groups of uroporphyrinogen-III to yield coproporphyrinogen-III. This is Uroporphyrinogen decarboxylase from Burkholderia mallei (strain NCTC 10247).